The primary structure comprises 1463 residues: DNA polymerase III PolC-type (1463 aa).

The Exonuclease domain maps to 425-581 (YVVFDVETTG…YDAEATGRLL (157 aa)).

Belongs to the DNA polymerase type-C family. PolC subfamily.

It localises to the cytoplasm. It carries out the reaction DNA(n) + a 2'-deoxyribonucleoside 5'-triphosphate = DNA(n+1) + diphosphate. Functionally, required for replicative DNA synthesis. This DNA polymerase also exhibits 3' to 5' exonuclease activity. This Streptococcus pneumoniae serotype 4 (strain ATCC BAA-334 / TIGR4) protein is DNA polymerase III PolC-type.